A 157-amino-acid polypeptide reads, in one-letter code: NAD(P)H-quinone oxidoreductase subunit N (157 aa).

It belongs to the complex I NdhN subunit family. As to quaternary structure, NDH-1 can be composed of about 15 different subunits; different subcomplexes with different compositions have been identified which probably have different functions.

It localises to the cellular thylakoid membrane. It carries out the reaction a plastoquinone + NADH + (n+1) H(+)(in) = a plastoquinol + NAD(+) + n H(+)(out). The enzyme catalyses a plastoquinone + NADPH + (n+1) H(+)(in) = a plastoquinol + NADP(+) + n H(+)(out). Functionally, NDH-1 shuttles electrons from an unknown electron donor, via FMN and iron-sulfur (Fe-S) centers, to quinones in the respiratory and/or the photosynthetic chain. The immediate electron acceptor for the enzyme in this species is believed to be plastoquinone. Couples the redox reaction to proton translocation, and thus conserves the redox energy in a proton gradient. Cyanobacterial NDH-1 also plays a role in inorganic carbon-concentration. This chain is NAD(P)H-quinone oxidoreductase subunit N, found in Synechococcus sp. (strain CC9902).